Reading from the N-terminus, the 160-residue chain is Inorganic pyrophosphatase (160 aa).

K16, R28, and Y40 together coordinate substrate. Residues D50, D55, and D87 each coordinate Mg(2+). Position 126 (Y126) interacts with substrate.

The protein belongs to the PPase family. Homohexamer. Mg(2+) is required as a cofactor.

It is found in the cytoplasm. It carries out the reaction diphosphate + H2O = 2 phosphate + H(+). Catalyzes the hydrolysis of inorganic pyrophosphate (PPi) forming two phosphate ions. The chain is Inorganic pyrophosphatase from Nanoarchaeum equitans (strain Kin4-M).